We begin with the raw amino-acid sequence, 412 residues long: Heme chaperone HemW (412 aa).

The 238-residue stretch at 4 to 241 folds into the Radical SAM core domain; it reads GTYLMPTAAY…RHGQEVLTQA (238 aa). Y13 is an S-adenosyl-L-methionine binding site. [2Fe-2S] cluster is bound by residues C19, C23, and C26. S-adenosyl-L-methionine-binding positions include G72, 73 to 74, E105, Q132, R144, and D169; that span reads GT.

Belongs to the anaerobic coproporphyrinogen-III oxidase family. HemW subfamily. It depends on [4Fe-4S] cluster as a cofactor.

Its subcellular location is the cytoplasm. Its function is as follows. Probably acts as a heme chaperone, transferring heme to an unknown acceptor. Binds one molecule of heme per monomer, possibly covalently. Binds 1 [2Fe-2S] cluster. Although this protein has sequence motifs typically found in proteins binding the [4Fe-4S]-AdoMet radical-SAM cluster and S-adenosylmethionine, spectroscopic evidence suggests that a [2Fe-2S] cluster is present; S-adenosylmethionine was not detected. Has no detectable coproporphyrinogen-III oxidase activity. This chain is Heme chaperone HemW, found in Synechocystis sp. (strain ATCC 27184 / PCC 6803 / Kazusa).